Consider the following 321-residue polypeptide: Translation initiation factor eIF2B subunit alpha (321 aa).

The protein belongs to the eIF-2B alpha/beta/delta subunits family. In terms of assembly, component of the translation initiation factor 2B (eIF2B) complex which is a heterodecamer of two sets of five different subunits: alpha, beta, gamma, delta and epsilon. Subunits alpha, beta and delta comprise a regulatory subcomplex and subunits epsilon and gamma comprise a catalytic subcomplex. Within the complex, the hexameric regulatory complex resides at the center, with the two heterodimeric catalytic subcomplexes bound on opposite sides.

Its subcellular location is the cytoplasm. It localises to the cytosol. Its function is as follows. Acts as a component of the translation initiation factor 2B (eIF2B) complex, which catalyzes the exchange of GDP for GTP on eukaryotic initiation factor 2 (eIF2) gamma subunit. Its guanine nucleotide exchange factor activity is repressed when bound to eIF2 complex phosphorylated on the alpha subunit, thereby limiting the amount of methionyl-initiator methionine tRNA available to the ribosome and consequently global translation is repressed. The sequence is that of Translation initiation factor eIF2B subunit alpha (eif2b1) from Dictyostelium discoideum (Social amoeba).